The following is a 354-amino-acid chain: Cysteine proteinase A (354 aa).

A signal peptide spans 1 to 24; sequence MARRNPLLFAIVVTILFVVCYGSA. The propeptide at 25–125 is activation peptide; the sequence is LIAQTPPPVD…HKEDVHVDDS (101 aa). 3 disulfide bridges follow: C150-C191, C184-C229, and C282-C330. Residue C153 is part of the active site. N208 is a glycosylation site (N-linked (GlcNAc...) asparagine). Active-site residues include H289 and N309.

Belongs to the peptidase C1 family.

The protein is Cysteine proteinase A (LMCPA) of Leishmania mexicana.